A 356-amino-acid chain; its full sequence is DNA integrity scanning protein DisA (356 aa).

One can recognise a DAC domain in the interval 11 to 149 (VHTMRDTLQR…EGKSHILEEP (139 aa)). Residues Gly78, Leu96, and 109-113 (TRHRS) each bind ATP.

This sequence belongs to the DisA family. Homooctamer. Mg(2+) serves as cofactor.

The enzyme catalyses 2 ATP = 3',3'-c-di-AMP + 2 diphosphate. Its function is as follows. Participates in a DNA-damage check-point. DisA forms globular foci that rapidly scan along the chromosomes searching for lesions. In terms of biological role, also has diadenylate cyclase activity, catalyzing the condensation of 2 ATP molecules into cyclic di-AMP (c-di-AMP). c-di-AMP likely acts as a signaling molecule that may couple DNA integrity with a cellular process. The polypeptide is DNA integrity scanning protein DisA (Corynebacterium efficiens (strain DSM 44549 / YS-314 / AJ 12310 / JCM 11189 / NBRC 100395)).